Here is a 283-residue protein sequence, read N- to C-terminus: Mau operon transcriptional activator (283 aa).

Residues 1–58 (MNWDDLRVVAAINRCGSFNRAAKMLNVEETTIARRLARLEGSLGCVLFQAVDGQRRPT) enclose the HTH lysR-type domain. The H-T-H motif DNA-binding region spans 18–37 (FNRAAKMLNVEETTIARRLA).

This sequence belongs to the LysR transcriptional regulatory family.

Its function is as follows. Transcriptional activator of the mau genes involved in methylamine metabolism. The polypeptide is Mau operon transcriptional activator (mauR) (Paracoccus denitrificans).